Reading from the N-terminus, the 2792-residue chain is MTSIHFVVHPLPGTEDQLNDRLREVSEKLNKYNLNSHPPLNVLEQATIKQCVVGPNHAAFLLEDGRICRIGFSVQPDRLELGKPDNNDGSKLNSSSGTGRTSRPGRTSDSPWFLSGSETLGRLAGNTLGSRWSSGVGGSGGGSSGRSSAGARDSRRQTRVIRTGRDRGSGLLGSQPQPVIPASVIPEELISQAQVVLQGKSRSVIIRELQRTNLDVNLAVNNLLSRDDEDGDDGDDTASESYLPGEDLMSLLDADIHSAHPSVIIDADAMFSEDISYFGYPSFRRSSLSRLGSSRERDSELLRERESVLRLRERRWLDGASFDNERGSTSKEGESNPDKKNTPVQSPVSLGEDLQWWPDKDGTKFTCIGALYSELLAVSSKGELYQWKWSESEPYRNAQNPSLHHPRATFLGLTNEKIVLLSANSIRATVATENNKVATWVDETLSSVASKLEHTAQTYSELQGERIVSLHCCALYTCAQLENNLYWWGVVPFSQRKKMLEKARAKNKKPKSSAGISSMPNITVGTQVCLRNNPLYHAGAVAFSISAGIPKVGVLMESVWNMNDSCRFQLRSPESLKSMEKASKTLETKPESKQEPVKTEMGPPPSPASTCSDASSIASSASMPYKRRRSTPAPREEEKVNEEQWPLREVVFVEDVKNVPVGKVLKVDGAYVAVKFPGTSTNTTCQNSSGPDADPSSLLQDCRLLRIDELQVVKTGGTPKVPDCFQRTPKKLCIPEKTEILAVNVDSKGVHAVLKTGSWVRYCVFDLATGKAEQENNFPTSSVAFLGQDERSVAIFTAGQESPIVLRDGNGTIYPMAKDCMGGIRDPDWLDLPPISSLGMGVHSLINLPANSTIKKKAAIIIMAVEKQTLMQHILRCDYEACRQYLVNLEQAVVLEQNRQMLQTFISHRCDGNRNILHACVSVCFPTSNKETKEEEEAERSERNTFAERLSAVEAIANAISVVSSNGPGNRAGSSNSRSLRLREMMRRSLRAAGLGRHEAGASSSDHQDPVSPPIAPPSWVPDPPSMDPDGDIDFILAPAVGSLTTAATGSGQGPSTSTIPGPSTEPSVVESKDRKANAHFILKLLCDSAVLQPYLRELLSAKDARGMTPFMSAVSGRAYSAAITILETAQKIAKAEVSASEKEEDVFMGMVCPSGTNPDDSPLYVLCCNDTCSFTWTGAEHINQDIFECRTCGLLESLCCCTECARVCHKGHDCKLKRTSPTAYCDCWEKCKCKTLIAGQKSARLDLLYRLLTATNLVTLPNSRGEHLLLFLVQTVARQTVEHCQYRPPRIREDRNRKTASPEDSDMPDHDLEPPRFAQLALERVLQDWNALRSMIMFGSQENKDPLSASSRIGHLLPEEQVYLNQQSGTIRLDCFTHCLIVKCTADILLLDTLLGTLVKELQNKYTPGRREEAIAVTMRFLRSVARVFVILSVEMASSKKKNNFIPQPIGKCKRVFQALLPYAVEELCNVAESLIVPVRMGIARPTAPFTLASTSIDAMQGSEELFSVEPLPPRPSSDQASSSSQSQSSYIIRNPQQRRISQSQPVRGRDEEQDDIVSADVEEVEVVEGVAGEEDHHDEQEEHGEENAEAEGHHDEHDEDGSDMELDLLAAAETESDSESNHSNQDNASGRRSVVTAATAGSEAGASSVPAFFSEDDSQSNDSSDSDSSSSQSDDIEQETFMLDEPLERTTNSSHANGAAQAPRSMQWAVRNPQHQRAASTAPSSTSTPAASSAGLIYIDPSNLRRSGTISTSAAAAAAALEASNASSYLTSASSLARAYSIVIRQISDLMGLIPKYNHLVYSQIPAAVKLTYQDAVNLQNYVEEKLIPTWNWMVSVMDSTEAQLRYGSALASAGDPGHPNHPLHASQNSARRERMTAREEASLRTLEGRRRATLLSARQGMMSARGDFLNYALSLMRSHNDEHSDVLPVLDVCSLKHVAYVFQALIYWIKAMNQQTTLDTPQLERKRTRELLELGIDNEDSEHENDDDTSQSATLNDKDDDSLPAETGQNHPFFRRSDSMTFLGCIPPNPFEVPLAEAIPLADQPHLLQPNARKEDLFGRPSQGLYSSSAGSGKCIVEVTMDRNCLEVLPTKMSYAANLKNVMNMQNRQKKEGEEQSLLAEEADSSKPGPSAPDVAAQLKSSLLAEIGLTESEGPPLTSFRPQCSFMGMVISHDMLLGRWRLSLELFGRVFMEDVGAEPGSILTELGGFEVKESKFRREMEKLRNQQSRDLSLEVDRDRDLLIQQTMRQLNNHFGRRCATTPMAVHRVKVTFKDEPGEGSGVARSFYTAIAQAFLSNEKLPNLDCIQNANKGTHTSLMQRLRNRGERDREREREREMRRSSGLRAGSRRDRDRDFRRQLSIDTRPFRPASEGNPSDDPDPLPAHRQALGERLYPRVQAMQPAFASKITGMLLELSPAQLLLLLASEDSLRARVDEAMELIIAHGRENGADSILDLGLLDSSEKVQENRKRHGSSRSVVDMDLEDTDDGDDNAPLFYQPGKRGFYTPRPGKNTEARLNCFRNIGRILGLCLLQNELCPITLNRHVIKVLLGRKVNWHDFAFFDPVMYESLRQLILASQSSDADAVFSAMDLAFAIDLCKEEGGGQVELIPNGVNIPVTPQNVYEYVRKYAEHRMLVVAEQPLHAMRKGLLDVLPKNSLEDLTAEDFRLLVNGCGEVNVQMLISFTSFNDESGENAEKLLQFKRWFWSIVEKMSMTERQDLVYFWTSSPSLPASEEGFQPMPSITIRPPDDQHLPTANTCISRLYVPLYSSKQILKQKLLLAIKTKNFGFV.

N-acetylthreonine is present on Thr2. Basic and acidic residues predominate over residues 77–88 (DRLELGKPDNND). A disordered region spans residues 77-175 (DRLELGKPDN…DRGSGLLGSQ (99 aa)). Low complexity predominate over residues 94–111 (SSSGTGRTSRPGRTSDSP). Position 110 is a phosphoserine (Ser110). Residues 135 to 144 (GVGGSGGGSS) show a composition bias toward gly residues. The region spanning 184–226 (VIPEELISQAQVVLQGKSRSVIIRELQRTNLDVNLAVNNLLSR) is the UBA domain. The residue at position 321 (Ser321) is a Phosphoserine. Basic and acidic residues predominate over residues 322–341 (FDNERGSTSKEGESNPDKKN). The disordered stretch occupies residues 322–347 (FDNERGSTSKEGESNPDKKNTPVQSP). Ser346 and Ser572 each carry phosphoserine. The span at 577–598 (KSMEKASKTLETKPESKQEPVK) shows a compositional bias: basic and acidic residues. The segment at 577-642 (KSMEKASKTL…APREEEKVNE (66 aa)) is disordered. Ser606 carries the phosphoserine modification. Residues 608 to 622 (ASTCSDASSIASSAS) show a composition bias toward low complexity. Thr631 is subject to Phosphothreonine. A phosphoserine mark is found at Ser802, Ser922, and Ser1012. Disordered regions lie at residues 993–1029 (AGLGRHEAGASSSDHQDPVSPPIAPPSWVPDPPSMDP) and 1046–1069 (TAATGSGQGPSTSTIPGPSTEPSV). A compositionally biased stretch (pro residues) spans 1011–1027 (VSPPIAPPSWVPDPPSM). Positions 1046–1067 (TAATGSGQGPSTSTIPGPSTEP) are enriched in polar residues. 2 positions are modified to phosphothreonine: Thr1109 and Thr1129. The UBR-type zinc-finger motif lies at 1171–1239 (DTCSFTWTGA…EKCKCKTLIA (69 aa)). Residues Ser1221, Ser1302, Ser1349, Ser1369, and Ser1475 each carry the phosphoserine modification. Residues 1293-1312 (REDRNRKTASPEDSDMPDHD) form a disordered region. Positions 1509–1734 (SVEPLPPRPS…PSSTSTPAAS (226 aa)) are disordered. A compositionally biased stretch (low complexity) spans 1518–1531 (SSDQASSSSQSQSS). Polar residues predominate over residues 1532–1547 (YIIRNPQQRRISQSQP). Residue Ser1543 is modified to Phosphoserine. 2 stretches are compositionally biased toward acidic residues: residues 1553–1568 (EEQDDIVSADVEEVEV) and 1599–1608 (HDEDGSDMEL). The segment covering 1623–1632 (NHSNQDNASG) has biased composition (polar residues). 3 stretches are compositionally biased toward low complexity: residues 1635-1651 (SVVTAATAGSEAGASSV), 1662-1675 (SNDSSDSDSSSSQS), and 1720-1734 (AASTAPSSTSTPAAS). Thr1730 carries the phosphothreonine modification. Ser1735 bears the Phosphoserine mark. Tyr1740 carries the phosphotyrosine modification. Residue Ser1774 is modified to Phosphoserine. Residues 1853–1884 (LASAGDPGHPNHPLHASQNSARRERMTAREEA) form a disordered region. The span at 1873–1884 (ARRERMTAREEA) shows a compositional bias: basic and acidic residues. Thr1963 carries the phosphothreonine modification. The interval 1978 to 2015 (GIDNEDSEHENDDDTSQSATLNDKDDDSLPAETGQNHP) is disordered. Residues 1979-1992 (IDNEDSEHENDDDT) are compositionally biased toward acidic residues. 3 positions are modified to phosphoserine: Ser1984, Ser2020, and Ser2022. Thr2024 is modified (phosphothreonine). Ser2070 is subject to Phosphoserine. A disordered region spans residues 2111–2137 (RQKKEGEEQSLLAEEADSSKPGPSAPD). Thr2207 carries the post-translational modification Phosphothreonine. A phosphoserine mark is found at Ser2235 and Ser2283. The tract at residues 2317 to 2387 (HTSLMQRLRN…SDDPDPLPAH (71 aa)) is disordered. Composition is skewed to basic and acidic residues over residues 2326–2342 (NRGERDREREREREMRR) and 2350–2362 (SRRDRDRDFRRQL). A PABC domain is found at 2371-2448 (PASEGNPSDD…AMELIIAHGR (78 aa)). The HECT domain occupies 2455-2792 (ILDLGLLDSS…AIKTKNFGFV (338 aa)). Ser2463, Ser2477, and Ser2479 each carry phosphoserine. The disordered stretch occupies residues 2467-2494 (VQENRKRHGSSRSVVDMDLEDTDDGDDN). Acidic residues predominate over residues 2483 to 2493 (MDLEDTDDGDD). Cys2761 acts as the Glycyl thioester intermediate in catalysis.

The protein belongs to the UBR5 family. Homotetramer; composed of a dimer of dimers. Associates with CDK9 and TFIIS/TCEA1 and forms a transcription regulatory complex made of CDK9, RNAP II, UBR5 and TFIIS/TCEA1 that can stimulate target gene transcription (e.g. gamma fibrinogen/FGG) by recruiting their promoters. Associates with the E3 ligase complex containing DYRK2, EDD/UBR5, DDB1 and DCAF1 proteins (EDVP complex). Binds TOPBP1. Interacts with PIH1D1. Interacts with CIB1.

Its subcellular location is the nucleus. It is found in the cytoplasm. The catalysed reaction is S-ubiquitinyl-[E2 ubiquitin-conjugating enzyme]-L-cysteine + [acceptor protein]-L-lysine = [E2 ubiquitin-conjugating enzyme]-L-cysteine + N(6)-ubiquitinyl-[acceptor protein]-L-lysine.. The protein operates within protein modification; protein ubiquitination. In terms of biological role, E3 ubiquitin-protein ligase involved in different protein quality control pathways in the cytoplasm and nucleus. Mainly acts as a ubiquitin chain elongator that extends pre-ubiquitinated substrates. Component of the N-end rule pathway: ubiquitinates proteins bearing specific N-terminal residues that are destabilizing according to the N-end rule, leading to their degradation. Recognizes type-1 N-degrons, containing positively charged amino acids (Arg, Lys and His). Together with UBR4, part of a cytoplasm protein quality control pathway that prevents protein aggregation by catalyzing assembly of heterotypic 'Lys-11'-/'Lys-48'-linked branched ubiquitin chains on aggregated proteins, leading to substrate recognition by the segregase p97/VCP and degradation by the proteasome: UBR5 is probably branching multiple 'Lys-48'-linked chains of substrates initially modified with mixed conjugates by UBR4. Together with ITCH, catalyzes 'Lys-48'-/'Lys-63'-branched ubiquitination of TXNIP, leading to its degradation: UBR5 mediates branching of 'Lys-48'-linked chains of substrates initially modified with 'Lys-63'-linked conjugates by ITCH. Catalytic component of a nuclear protein quality control pathway that mediates ubiquitination and degradation of unpaired transcription factors (i.e. transcription factors that are not assembled into functional multiprotein complexes): specifically recognizes and binds degrons that are not accessible when transcription regulators are associated with their coactivators. Ubiquitinates various unpaired transcription regulator (MYC, SUPT4H1, SUPT5H, CDC20 and MCRS1), as well as ligand-bound nuclear receptors (ESR1, NR1H3, NR3C1, PGR, RARA, RXRA AND VDR) that are not associated with their nuclear receptor coactivators (NCOAs). Involved in maturation and/or transcriptional regulation of mRNA by mediating polyubiquitination and activation of CDK9. Also acts as a regulator of DNA damage response by acting as a suppressor of RNF168, an E3 ubiquitin-protein ligase that promotes accumulation of 'Lys-63'-linked histone H2A and H2AX at DNA damage sites, thereby acting as a guard against excessive spreading of ubiquitinated chromatin at damaged chromosomes. Regulates DNA topoisomerase II binding protein (TopBP1) in the DNA damage response. Ubiquitinates acetylated PCK1. Acts as a positive regulator of the canonical Wnt signaling pathway by mediating (1) ubiquitination and stabilization of CTNNB1, and (2) 'Lys-48'-linked ubiquitination and degradation of TLE3. Promotes disassembly of the mitotic checkpoint complex (MCC) from the APC/C complex by catalyzing ubiquitination of BUB1B, BUB3 and CDC20. Plays an essential role in extraembryonic development. Required for the maintenance of skeletal tissue homeostasis by acting as an inhibitor of hedgehog (HH) signaling. The sequence is that of E3 ubiquitin-protein ligase UBR5 from Mus musculus (Mouse).